The following is a 262-amino-acid chain: MNILVVESQEKLAEAGYKLIENVVKSKGNPTLGMATGSSPLGIYAEIRKNKLDTSHVTTVNLDEYVNLPHEDKNSYHYFMKEQLFDHLPFKATYVPNGMANDLEEECNRYEGILAANPVDLQILGIGENGHIGFNEPGTPFHSRTHIVELTESTRQANRRFFEKEEDVPTHAITMGIGSIMKAKQILLVAMGPKKAEAVKELLQGEYSEACPATVLQRHPNVTVIADQEALSLCSEAIADEHRQVFTISDLLSDSRVGETAN.

Catalysis depends on D63, which acts as the Proton acceptor; for enolization step. N129 serves as the catalytic For ring-opening step. Residue H131 is the Proton acceptor; for ring-opening step of the active site. Catalysis depends on E136, which acts as the For ring-opening step.

This sequence belongs to the glucosamine/galactosamine-6-phosphate isomerase family. NagB subfamily.

The enzyme catalyses alpha-D-glucosamine 6-phosphate + H2O = beta-D-fructose 6-phosphate + NH4(+). It participates in amino-sugar metabolism; N-acetylneuraminate degradation; D-fructose 6-phosphate from N-acetylneuraminate: step 5/5. Catalyzes the reversible isomerization-deamination of glucosamine 6-phosphate (GlcN6P) to form fructose 6-phosphate (Fru6P) and ammonium ion. The polypeptide is Glucosamine-6-phosphate deaminase (Bacillus cytotoxicus (strain DSM 22905 / CIP 110041 / 391-98 / NVH 391-98)).